Reading from the N-terminus, the 320-residue chain is ATP-dependent 6-phosphofructokinase (320 aa).

G12 lines the ATP pocket. An ADP-binding site is contributed by 22–26 (RGVVR). ATP-binding positions include 73 to 74 (RF) and 103 to 106 (GDGS). Position 104 (D104) interacts with Mg(2+). 126–128 (TID) contacts substrate. D128 serves as the catalytic Proton acceptor. R155 is an ADP binding site. Residues R163 and 170 to 172 (MGR) each bind substrate. ADP contacts are provided by residues 186-188 (GCE), K212, and 214-216 (KKH). Substrate is bound by residues E223, R244, and 250 to 253 (HIQR).

It belongs to the phosphofructokinase type A (PFKA) family. ATP-dependent PFK group I subfamily. Prokaryotic clade 'B1' sub-subfamily. Homotetramer. Requires Mg(2+) as cofactor.

The protein localises to the cytoplasm. The catalysed reaction is beta-D-fructose 6-phosphate + ATP = beta-D-fructose 1,6-bisphosphate + ADP + H(+). The protein operates within carbohydrate degradation; glycolysis; D-glyceraldehyde 3-phosphate and glycerone phosphate from D-glucose: step 3/4. Allosterically activated by ADP and other diphosphonucleosides, and allosterically inhibited by phosphoenolpyruvate. Its function is as follows. Catalyzes the phosphorylation of D-fructose 6-phosphate to fructose 1,6-bisphosphate by ATP, the first committing step of glycolysis. The protein is ATP-dependent 6-phosphofructokinase of Vibrio parahaemolyticus serotype O3:K6 (strain RIMD 2210633).